The chain runs to 110 residues: Insulin growth factor-like family member 1 (110 aa).

Positions 1–24 (MAPRGCIVAVFAIFCISRLLCSHG) are cleaved as a signal peptide. A glycan (N-linked (GlcNAc...) asparagine) is linked at Asn71.

This sequence belongs to the IGFL family. Homodimer; disulfide-linked. Detected in ovary and spinal cord.

It is found in the secreted. Functionally, probable ligand of the IGFLR1 cell membrane receptor. In Homo sapiens (Human), this protein is Insulin growth factor-like family member 1 (IGFL1).